Consider the following 211-residue polypeptide: Endonuclease V (211 aa).

2 residues coordinate Mg(2+): Asp-37 and Asp-102.

The protein belongs to the endonuclease V family. Mg(2+) serves as cofactor.

Its subcellular location is the cytoplasm. The enzyme catalyses Endonucleolytic cleavage at apurinic or apyrimidinic sites to products with a 5'-phosphate.. DNA repair enzyme involved in the repair of deaminated bases. Selectively cleaves double-stranded DNA at the second phosphodiester bond 3' to a deoxyinosine leaving behind the intact lesion on the nicked DNA. This chain is Endonuclease V, found in Ignicoccus hospitalis (strain KIN4/I / DSM 18386 / JCM 14125).